We begin with the raw amino-acid sequence, 751 residues long: Dual specificity tyrosine-phosphorylation-regulated kinase 1A (751 aa).

Residues tyrosine 59 to proline 68 are compositionally biased toward polar residues. Disordered stretches follow at residues tyrosine 59–alanine 81 and tyrosine 104–asparagine 129. The Bipartite nuclear localization signal signature appears at arginine 109 to lysine 126. One can recognise a Protein kinase domain in the interval tyrosine 151–phenylalanine 471. ATP contacts are provided by residues isoleucine 157 to valine 165, lysine 180, and phenylalanine 230 to leucine 233. The active-site Proton acceptor is aspartate 279. The span at glutamate 477 to glutamine 493 shows a compositional bias: polar residues. 3 disordered regions span residues glutamate 477–glycine 532, histidine 580–alanine 667, and glycine 730–serine 751. The span at serine 494–glycine 517 shows a compositional bias: low complexity. Residues glutamine 585–serine 613 are histidine-rich domain (HRD). The segment covering proline 589 to glutamine 609 has biased composition (basic residues). A compositionally biased stretch (polar residues) spans valine 611–asparagine 622. Low complexity-rich tracts occupy residues serine 623–serine 633 and serine 642–threonine 660. Residues cysteine 742–serine 751 are compositionally biased toward polar residues.

The protein belongs to the protein kinase superfamily. CMGC Ser/Thr protein kinase family. MNB/DYRK subfamily. In terms of processing, autophosphorylated on tyrosine residues.

The protein localises to the nucleus. The protein resides in the nucleus speckle. It carries out the reaction L-seryl-[protein] + ATP = O-phospho-L-seryl-[protein] + ADP + H(+). The enzyme catalyses L-threonyl-[protein] + ATP = O-phospho-L-threonyl-[protein] + ADP + H(+). It catalyses the reaction L-tyrosyl-[protein] + ATP = O-phospho-L-tyrosyl-[protein] + ADP + H(+). The catalysed reaction is [DNA-directed RNA polymerase] + ATP = phospho-[DNA-directed RNA polymerase] + ADP + H(+). Its function is as follows. Dual-specificity kinase which possesses both serine/threonine and tyrosine kinase activities. Exhibits a substrate preference for proline at position P+1 and arginine at position P-3. Plays an important role in double-strand breaks (DSBs) repair following DNA damage. Mechanistically, phosphorylates RNF169 and increases its ability to block accumulation of TP53BP1 at the DSB sites thereby promoting homologous recombination repair (HRR). Also acts as a positive regulator of transcription by acting as a CTD kinase that mediates phosphorylation of the CTD (C-terminal domain) of the large subunit of RNA polymerase II (RNAP II) POLR2A. Modulates alternative splicing by phosphorylating the splice factor SRSF6. Phosphorylates SEPTIN4, SEPTIN5 and SF3B1. The polypeptide is Dual specificity tyrosine-phosphorylation-regulated kinase 1A (Xenopus tropicalis (Western clawed frog)).